Consider the following 100-residue polypeptide: Urease subunit gamma (100 aa).

The protein belongs to the urease gamma subunit family. In terms of assembly, heterotrimer of UreA (gamma), UreB (beta) and UreC (alpha) subunits. Three heterotrimers associate to form the active enzyme.

It localises to the cytoplasm. It carries out the reaction urea + 2 H2O + H(+) = hydrogencarbonate + 2 NH4(+). It functions in the pathway nitrogen metabolism; urea degradation; CO(2) and NH(3) from urea (urease route): step 1/1. This is Urease subunit gamma from Actinobacillus pleuropneumoniae serotype 5b (strain L20).